The chain runs to 55 residues: Large ribosomal subunit protein bL33 (55 aa).

This sequence belongs to the bacterial ribosomal protein bL33 family.

This Bifidobacterium longum (strain DJO10A) protein is Large ribosomal subunit protein bL33.